We begin with the raw amino-acid sequence, 478 residues long: ATP synthase subunit beta (478 aa).

G155 to T162 is a binding site for ATP.

It belongs to the ATPase alpha/beta chains family. As to quaternary structure, F-type ATPases have 2 components, CF(1) - the catalytic core - and CF(0) - the membrane proton channel. CF(1) has five subunits: alpha(3), beta(3), gamma(1), delta(1), epsilon(1). CF(0) has three main subunits: a(1), b(2) and c(9-12). The alpha and beta chains form an alternating ring which encloses part of the gamma chain. CF(1) is attached to CF(0) by a central stalk formed by the gamma and epsilon chains, while a peripheral stalk is formed by the delta and b chains.

Its subcellular location is the cell inner membrane. The catalysed reaction is ATP + H2O + 4 H(+)(in) = ADP + phosphate + 5 H(+)(out). Produces ATP from ADP in the presence of a proton gradient across the membrane. The catalytic sites are hosted primarily by the beta subunits. The polypeptide is ATP synthase subunit beta (Fuscovulum blasticum (Rhodobacter blasticus)).